The sequence spans 321 residues: MERFSLRFVLMMVSIILTSSICQAQLSPTFYDQSCRNALSKIRSSVRTAIARERRMAASLIRMHFHDCFVHGCDASILLEGTSTIESERDALPNFKSVRGFEVIDKAKSEVEKVCPGIVSCADIIAVAARDASEYVGGPKWAVKVGRRDSTAAFKALANSGELPGFKDTLDQLSGLFSKKGLNTRDLVALSGAHTIGQSQCFLFRDRLYENSSDIDAGFASTRKRRCPTVGGDGNLAALDLVTPNSFDNNYYKNLMQKKGLLVTDQVLFGSGASTDGIVSEYSKNRSKFAADFATAMIKMGNIEPLTGSNGEIRKICSFVN.

Residues 1–24 (MERFSLRFVLMMVSIILTSSICQA) form the signal peptide. The residue at position 25 (Gln-25) is a Pyrrolidone carboxylic acid. Disulfide bonds link Cys-35–Cys-115, Cys-68–Cys-73, Cys-121–Cys-317, and Cys-201–Cys-227. Residue His-66 is the Proton acceptor of the active site. 5 residues coordinate Ca(2+): Asp-67, Val-70, Gly-72, Asp-74, and Ser-76. Pro-164 is a binding site for substrate. His-194 provides a ligand contact to heme b. Thr-195 lines the Ca(2+) pocket. N-linked (GlcNAc...) asparagine glycosylation occurs at Asn-211. Positions 240, 243, and 248 each coordinate Ca(2+). Asn-285 carries an N-linked (GlcNAc...) asparagine glycan.

It belongs to the peroxidase family. Classical plant (class III) peroxidase subfamily. Requires heme b as cofactor. The cofactor is Ca(2+).

The protein localises to the secreted. It catalyses the reaction 2 a phenolic donor + H2O2 = 2 a phenolic radical donor + 2 H2O. Its function is as follows. Removal of H(2)O(2), oxidation of toxic reductants, biosynthesis and degradation of lignin, suberization, auxin catabolism, response to environmental stresses such as wounding, pathogen attack and oxidative stress. These functions might be dependent on each isozyme/isoform in each plant tissue. The protein is Peroxidase 5 (PER5) of Arabidopsis thaliana (Mouse-ear cress).